Reading from the N-terminus, the 235-residue chain is Segregation and condensation protein A (235 aa).

The protein belongs to the ScpA family. In terms of assembly, component of a cohesin-like complex composed of ScpA, ScpB and the Smc homodimer, in which ScpA and ScpB bind to the head domain of Smc. The presence of the three proteins is required for the association of the complex with DNA.

It is found in the cytoplasm. Participates in chromosomal partition during cell division. May act via the formation of a condensin-like complex containing Smc and ScpB that pull DNA away from mid-cell into both cell halves. The protein is Segregation and condensation protein A of Streptococcus equi subsp. zooepidemicus (strain H70).